The sequence spans 121 residues: Perlustrin-like protein (121 aa).

An N-terminal signal peptide occupies residues Met-1–Ala-23. The IGFBP N-terminal domain occupies Leu-24–Ser-104. Disulfide bonds link Cys-26–Cys-52, Cys-29–Cys-54, Cys-36–Cys-55, Cys-45–Cys-58, Cys-66–Cys-79, and Cys-73–Cys-101. Residues Asn-68, Asn-81, and Asn-117 are each glycosylated (N-linked (GlcNAc...) asparagine).

As to expression, component of the acid-insoluble organic matrix of calcified layers of the shell (at protein level).

It is found in the secreted. The protein is Perlustrin-like protein of Lottia gigantea (Giant owl limpet).